We begin with the raw amino-acid sequence, 514 residues long: Maturase K (514 aa).

This sequence belongs to the intron maturase 2 family. MatK subfamily.

It is found in the plastid. It localises to the chloroplast. In terms of biological role, usually encoded in the trnK tRNA gene intron. Probably assists in splicing its own and other chloroplast group II introns. The chain is Maturase K from Dioon spinulosum (Gum palm).